The primary structure comprises 511 residues: Bifunctional purine biosynthesis protein PurH (511 aa).

The MGS-like domain maps to 1 to 145 (MKKRALVSVS…KNHKFVSVIV (145 aa)).

The protein belongs to the PurH family.

The enzyme catalyses (6R)-10-formyltetrahydrofolate + 5-amino-1-(5-phospho-beta-D-ribosyl)imidazole-4-carboxamide = 5-formamido-1-(5-phospho-D-ribosyl)imidazole-4-carboxamide + (6S)-5,6,7,8-tetrahydrofolate. It carries out the reaction IMP + H2O = 5-formamido-1-(5-phospho-D-ribosyl)imidazole-4-carboxamide. It functions in the pathway purine metabolism; IMP biosynthesis via de novo pathway; 5-formamido-1-(5-phospho-D-ribosyl)imidazole-4-carboxamide from 5-amino-1-(5-phospho-D-ribosyl)imidazole-4-carboxamide (10-formyl THF route): step 1/1. The protein operates within purine metabolism; IMP biosynthesis via de novo pathway; IMP from 5-formamido-1-(5-phospho-D-ribosyl)imidazole-4-carboxamide: step 1/1. The protein is Bifunctional purine biosynthesis protein PurH of Bacillus cereus (strain ZK / E33L).